The primary structure comprises 906 residues: DNA gyrase subunit A (906 aa).

Residues 35–524 form the Topo IIA-type catalytic domain; that stretch reads IPDVRDGLKP…GEFDQDIEDL (490 aa). Catalysis depends on tyrosine 123, which acts as the O-(5'-phospho-DNA)-tyrosine intermediate. Residues 551–557 carry the GyrA-box motif; that stretch reads QKRGGKG. A disordered region spans residues 886–906; it reads SESEEDSELEEDLEQAEEVYT.

This sequence belongs to the type II topoisomerase GyrA/ParC subunit family. As to quaternary structure, heterotetramer, composed of two GyrA and two GyrB chains. In the heterotetramer, GyrA contains the active site tyrosine that forms a transient covalent intermediate with DNA, while GyrB binds cofactors and catalyzes ATP hydrolysis.

The protein resides in the cytoplasm. The enzyme catalyses ATP-dependent breakage, passage and rejoining of double-stranded DNA.. Its function is as follows. A type II topoisomerase that negatively supercoils closed circular double-stranded (ds) DNA in an ATP-dependent manner to modulate DNA topology and maintain chromosomes in an underwound state. Negative supercoiling favors strand separation, and DNA replication, transcription, recombination and repair, all of which involve strand separation. Also able to catalyze the interconversion of other topological isomers of dsDNA rings, including catenanes and knotted rings. Type II topoisomerases break and join 2 DNA strands simultaneously in an ATP-dependent manner. In Rickettsia felis (strain ATCC VR-1525 / URRWXCal2) (Rickettsia azadi), this protein is DNA gyrase subunit A.